Here is a 58-residue protein sequence, read N- to C-terminus: ATP synthase F(0) complex subunit k, mitochondrial (58 aa).

Residues K16 and K17 each carry the N6-acetyllysine modification. The chain crosses the membrane as a helical span at residues 23–45 (TLTGRMNCVLATYGGIALLVLYF).

Component of the ATP synthase complex composed at least of ATP5F1A/subunit alpha, ATP5F1B/subunit beta, ATP5MC1/subunit c (homooctomer), MT-ATP6/subunit a, MT-ATP8/subunit 8, ATP5ME/subunit e, ATP5MF/subunit f, ATP5MG/subunit g, ATP5MK/subunit k, ATP5MJ/subunit j, ATP5F1C/subunit gamma, ATP5F1D/subunit delta, ATP5F1E/subunit epsilon, ATP5PF/subunit F6, ATP5PB/subunit b, ATP5PD/subunit d, ATP5PO/subunit OSCP. ATP synthase complex consists of a soluble F(1) head domain (subunits alpha(3) and beta(3)) - the catalytic core - and a membrane F(0) domain - the membrane proton channel (subunits c, a, 8, e, f, g, k and j). These two domains are linked by a central stalk (subunits gamma, delta, and epsilon) rotating inside the F1 region and a stationary peripheral stalk (subunits F6, b, d, and OSCP). The ATP synthase complex/complex V exists as a monomeric and a dimeric supercomplex that helps shape mitochondrial cristae to optimize proton flow.

Its subcellular location is the mitochondrion membrane. Subunit k, of the mitochondrial membrane ATP synthase complex (F(1)F(0) ATP synthase or Complex V) that produces ATP from ADP in the presence of a proton gradient across the membrane which is generated by electron transport complexes of the respiratory chain. ATP synthase complex consist of a soluble F(1) head domain - the catalytic core - and a membrane F(1) domain - the membrane proton channel. These two domains are linked by a central stalk rotating inside the F(1) region and a stationary peripheral stalk. During catalysis, ATP synthesis in the catalytic domain of F(1) is coupled via a rotary mechanism of the central stalk subunits to proton translocation. In vivo, can only synthesize ATP although its ATP hydrolase activity can be activated artificially in vitro. Part of the complex F(0) domain. Required for dimerization of the ATP synthase complex and as such regulates ATP synthesis in the mitochondria. This Mus musculus (Mouse) protein is ATP synthase F(0) complex subunit k, mitochondrial.